A 122-amino-acid polypeptide reads, in one-letter code: Holo-[acyl-carrier-protein] synthase (122 aa).

Asp8 and Glu52 together coordinate Mg(2+).

This sequence belongs to the P-Pant transferase superfamily. AcpS family. Requires Mg(2+) as cofactor.

Its subcellular location is the cytoplasm. The enzyme catalyses apo-[ACP] + CoA = holo-[ACP] + adenosine 3',5'-bisphosphate + H(+). In terms of biological role, transfers the 4'-phosphopantetheine moiety from coenzyme A to a Ser of acyl-carrier-protein. This chain is Holo-[acyl-carrier-protein] synthase, found in Lachnoclostridium phytofermentans (strain ATCC 700394 / DSM 18823 / ISDg) (Clostridium phytofermentans).